Consider the following 334-residue polypeptide: Phenazine-1-carboxylate N-methyltransferase (334 aa).

S-adenosyl-L-methionine-binding residues include aspartate 198 and arginine 241.

Belongs to the class I-like SAM-binding methyltransferase superfamily. Cation-independent O-methyltransferase family. Homodimer in solution. Probably interacts transiently with PhzS.

It catalyses the reaction phenazine-1-carboxylate + S-adenosyl-L-methionine = 5-methyl-phenazine-1-carboxylate + S-adenosyl-L-homocysteine. Its pathway is secondary metabolite biosynthesis; pyocyanine biosynthesis. With respect to regulation, in vitro, requires PhzS for activity. Its function is as follows. Involved in the biosynthesis of pyocyanine, a blue-pigmented phenazine derivative, which plays a role in virulence. Converts phenazine-1-carboxylate (PCA) to 5-methylphenazine-1-carboxylate (5-methyl-PCA). This is Phenazine-1-carboxylate N-methyltransferase from Pseudomonas aeruginosa (strain ATCC 15692 / DSM 22644 / CIP 104116 / JCM 14847 / LMG 12228 / 1C / PRS 101 / PAO1).